Consider the following 285-residue polypeptide: HTH-type transcriptional regulator MurR (285 aa).

One can recognise an HTH rpiR-type domain in the interval 1-77 (MLYLTKISNA…MALIGEYSAS (77 aa)). A DNA-binding region (H-T-H motif) is located at residues 37 to 56 (SRQMAKQLGISQSSIVKFAQ). The SIS domain occupies 128-279 (IIEVISKAPF…SLKMIQRSSE (152 aa)).

In terms of assembly, homotetramer.

The protein operates within amino-sugar metabolism; N-acetylmuramate degradation [regulation]. Functionally, represses the expression of the murPQ operon involved in the uptake and degradation of N-acetylmuramic acid (MurNAc). Binds to two adjacent inverted repeats within the operator region. MurNAc 6-phosphate, the substrate of MurQ, is the specific inducer that weakens binding of MurR to the operator. The chain is HTH-type transcriptional regulator MurR from Shigella boydii serotype 4 (strain Sb227).